The following is a 156-amino-acid chain: Endogenous retrovirus group K member 10 Pro protein (156 aa).

Residues 21–96 (FEGLVDTGAD…IPLNLWGRDL (76 aa)) enclose the Peptidase A2 domain. Aspartate 26 is a catalytic residue. The G-patch domain occupies 111–156 (YSPTSQKIMTKMGYIPGKGLGKNEDGIKVPVEAKINQEREGIGYPF).

This sequence belongs to the peptidase A2 family. HERV class-II K(HML-2) subfamily. As to quaternary structure, active as a homodimer. In terms of processing, autoproteolytically processed at the N-terminus. Expected C-terminal autoprocessing not detected. The sequence shown is that of the processed Pro protein.

It carries out the reaction Processing at the authentic HIV-1 PR recognition site and release of the mature p17 matrix and the p24 capsid protein, as a result of the cleavage of the -SQNY-|-PIVQ- cleavage site.. With respect to regulation, resistant to a number of clinically useful HIV-1 PR inhibitors. Inhibited by cyclic urea SD146. Functionally, retroviral proteases have roles in processing of the primary translation products and the maturation of the viral particle. Endogenous Pro proteins may have kept, lost or modified their original function during evolution. This endogenous protein has retained most of the characteristics of retroviral proteases. This is Endogenous retrovirus group K member 10 Pro protein (ERVK-10) from Homo sapiens (Human).